Reading from the N-terminus, the 79-residue chain is uncharacterized protein (79 aa).

The segment at 1–27 (MRQRGQEHLPTSVKSEPRACNNPTVAE) is disordered.

This is an uncharacterized protein from Homo sapiens (Human).